Reading from the N-terminus, the 138-residue chain is Histone H2B.4 (138 aa).

The segment covering 1-39 (MAPKAAEKKPAEKKPAGKAPAEKLPKAEKKISKDAGGSE) has biased composition (basic and acidic residues). The tract at residues 1 to 48 (MAPKAAEKKPAEKKPAGKAPAEKLPKAEKKISKDAGGSEKKKKKSKKS) is disordered. The residue at position 2 (alanine 2) is a N,N,N-trimethylalanine; alternate. Alanine 2 bears the N,N-dimethylalanine; alternate mark. Alanine 2 is subject to N-methylalanine; alternate. Lysine 4 carries the N6-methyllysine modification. N6-acetyllysine is present on residues lysine 8 and lysine 13. Position 14 is an N6,N6-dimethyllysine (lysine 14). N6-acetyllysine occurs at positions 18, 23, 29, and 30. Lysine 135 is covalently cross-linked (Glycyl lysine isopeptide (Lys-Gly) (interchain with G-Cter in ubiquitin)).

The protein belongs to the histone H2B family. The nucleosome is a histone octamer containing two molecules each of H2A, H2B, H3 and H4 assembled in one H3-H4 heterotetramer and two H2A-H2B heterodimers. The octamer wraps approximately 147 bp of DNA. In terms of processing, can be acetylated to form H2BK6ac, H2BK33ac and H2BK34ac. Post-translationally, monoubiquitinated by BRE1 to form H2BK143ub1 and deubiquitinated by UBP26. Required for heterochromatic histone H3 di- and trimethylation at H3K4me. May give a specific tag for epigenetic transcriptional activation.

The protein localises to the nucleus. It localises to the chromosome. Core component of nucleosome. Nucleosomes wrap and compact DNA into chromatin, limiting DNA accessibility to the cellular machineries which require DNA as a template. Histones thereby play a central role in transcription regulation, DNA repair, DNA replication and chromosomal stability. DNA accessibility is regulated via a complex set of post-translational modifications of histones, also called histone code, and nucleosome remodeling. This is Histone H2B.4 from Arabidopsis thaliana (Mouse-ear cress).